Here is a 36-residue protein sequence, read N- to C-terminus: Kappa-theraphotoxin-Aa1a (36 aa).

3 cysteine pairs are disulfide-bonded: cysteine 3/cysteine 18, cysteine 10/cysteine 23, and cysteine 17/cysteine 30. Isoleucine 36 bears the Isoleucine amide mark.

Belongs to the neurotoxin 10 (Hwtx-1) family. In terms of tissue distribution, expressed by the venom gland.

Its subcellular location is the secreted. Selective inhibitor of voltage-gated potassium channel Kv10.1/KCNH1/EAG1 (IC(50)=637 nM). It acts by shifting the voltage dependence of channel activation in a depolarising direction. It shows a 100% inhibition at saturating concentrations, shows fast on-rates and is reversible. It also slightly affects channel inactivation, when the membrane is highly depolarised (&gt;+80 mV). The sequence is that of Kappa-theraphotoxin-Aa1a from Avicularia aurantiaca (Yellow-banded pinktoe tarantula).